The sequence spans 177 residues: Large ribosomal subunit protein uL6 (177 aa).

The segment covering 157–171 has biased composition (basic and acidic residues); that stretch reads YKGKGVRYSDENVRR. A disordered region spans residues 157–177; that stretch reads YKGKGVRYSDENVRRKEAKKK.

Belongs to the universal ribosomal protein uL6 family. Part of the 50S ribosomal subunit.

This protein binds to the 23S rRNA, and is important in its secondary structure. It is located near the subunit interface in the base of the L7/L12 stalk, and near the tRNA binding site of the peptidyltransferase center. This is Large ribosomal subunit protein uL6 from Pseudoalteromonas translucida (strain TAC 125).